The chain runs to 223 residues: Deoxyribose-phosphate aldolase (223 aa).

D91 serves as the catalytic Proton donor/acceptor. The active-site Schiff-base intermediate with acetaldehyde is K153. Residue K182 is the Proton donor/acceptor of the active site.

The protein belongs to the DeoC/FbaB aldolase family. DeoC type 1 subfamily.

It localises to the cytoplasm. It carries out the reaction 2-deoxy-D-ribose 5-phosphate = D-glyceraldehyde 3-phosphate + acetaldehyde. The protein operates within carbohydrate degradation; 2-deoxy-D-ribose 1-phosphate degradation; D-glyceraldehyde 3-phosphate and acetaldehyde from 2-deoxy-alpha-D-ribose 1-phosphate: step 2/2. In terms of biological role, catalyzes a reversible aldol reaction between acetaldehyde and D-glyceraldehyde 3-phosphate to generate 2-deoxy-D-ribose 5-phosphate. The sequence is that of Deoxyribose-phosphate aldolase from Streptococcus pyogenes serotype M1.